The chain runs to 380 residues: Cytochrome b (380 aa).

Transmembrane regions (helical) follow at residues 34–54 (FGSL…LLAT), 78–99 (WLIR…YLHI), 114–134 (WNTG…GYVL), and 179–199 (FFAL…IHLT). Residues histidine 84 and histidine 98 each contribute to the heme b site. Residues histidine 183 and histidine 197 each contribute to the heme b site. Histidine 202 contributes to the a ubiquinone binding site. 4 consecutive transmembrane segments (helical) span residues 227–247 (LKDT…ALFS), 289–309 (LGGV…PLLH), 321–341 (FSQF…WVGS), and 348–368 (FIII…ILLP).

This sequence belongs to the cytochrome b family. The cytochrome bc1 complex contains 11 subunits: 3 respiratory subunits (MT-CYB, CYC1 and UQCRFS1), 2 core proteins (UQCRC1 and UQCRC2) and 6 low-molecular weight proteins (UQCRH/QCR6, UQCRB/QCR7, UQCRQ/QCR8, UQCR10/QCR9, UQCR11/QCR10 and a cleavage product of UQCRFS1). This cytochrome bc1 complex then forms a dimer. The cofactor is heme b.

It localises to the mitochondrion inner membrane. Its function is as follows. Component of the ubiquinol-cytochrome c reductase complex (complex III or cytochrome b-c1 complex) that is part of the mitochondrial respiratory chain. The b-c1 complex mediates electron transfer from ubiquinol to cytochrome c. Contributes to the generation of a proton gradient across the mitochondrial membrane that is then used for ATP synthesis. The sequence is that of Cytochrome b (MT-CYB) from Garrodia nereis (Grey-backed storm-petrel).